The chain runs to 841 residues: ATP-dependent helicase Lhr-Core (841 aa).

ATP is bound by residues Q39, K62, T63, D181, E182, I352, R369, and H372. Positions I43–Y234 constitute a Helicase ATP-binding domain. The short motif at D181–H184 is the DEVH box element. The 151-residue stretch at R266–D416 folds into the Helicase C-terminal domain. Residues V417–P500 are WH domain. A domain 4 region spans residues D501–K841.

The protein belongs to the Lhr helicase family. Lhr-Core subfamily. Monomer.

The catalysed reaction is Couples ATP hydrolysis with the unwinding of duplex DNA by translocating in the 3'-5' direction.. The enzyme catalyses ATP + H2O = ADP + phosphate + H(+). Functionally, DNA helicase that loads on single-stranded (ss)DNA and translocates in a 3'-5' direction, probably involved in DNA repair. Archaeal orthologs have double-stranded (ds)DNA and/or RNA:DNA helicase activity. This Methanocaldococcus jannaschii (strain ATCC 43067 / DSM 2661 / JAL-1 / JCM 10045 / NBRC 100440) (Methanococcus jannaschii) protein is ATP-dependent helicase Lhr-Core.